A 598-amino-acid polypeptide reads, in one-letter code: NADH-quinone oxidoreductase subunit C/D (598 aa).

The NADH dehydrogenase I subunit C stretch occupies residues 1-189 (MTDLTTSDSL…DPYVLTKQKE (189 aa)). Residues 213-598 (DFMFLNLGPN…IDFVMSDVDR (386 aa)) are NADH dehydrogenase I subunit D.

This sequence in the N-terminal section; belongs to the complex I 30 kDa subunit family. The protein in the C-terminal section; belongs to the complex I 49 kDa subunit family. As to quaternary structure, NDH-1 is composed of 13 different subunits. Subunits NuoB, CD, E, F, and G constitute the peripheral sector of the complex.

It localises to the cell inner membrane. It catalyses the reaction a quinone + NADH + 5 H(+)(in) = a quinol + NAD(+) + 4 H(+)(out). Functionally, NDH-1 shuttles electrons from NADH, via FMN and iron-sulfur (Fe-S) centers, to quinones in the respiratory chain. The immediate electron acceptor for the enzyme in this species is believed to be ubiquinone. Couples the redox reaction to proton translocation (for every two electrons transferred, four hydrogen ions are translocated across the cytoplasmic membrane), and thus conserves the redox energy in a proton gradient. This chain is NADH-quinone oxidoreductase subunit C/D, found in Yersinia pseudotuberculosis serotype O:1b (strain IP 31758).